The primary structure comprises 203 residues: dITP/XTP pyrophosphatase (203 aa).

A substrate-binding site is contributed by 16–21 (SHNRGK). 2 residues coordinate Mg(2+): E48 and D77. The active-site Proton acceptor is the D77. Substrate contacts are provided by residues S78, 161 to 164 (FGYD), K184, and 189 to 190 (HR).

It belongs to the HAM1 NTPase family. As to quaternary structure, homodimer. Requires Mg(2+) as cofactor.

It catalyses the reaction XTP + H2O = XMP + diphosphate + H(+). It carries out the reaction dITP + H2O = dIMP + diphosphate + H(+). The catalysed reaction is ITP + H2O = IMP + diphosphate + H(+). Pyrophosphatase that catalyzes the hydrolysis of nucleoside triphosphates to their monophosphate derivatives, with a high preference for the non-canonical purine nucleotides XTP (xanthosine triphosphate), dITP (deoxyinosine triphosphate) and ITP. Seems to function as a house-cleaning enzyme that removes non-canonical purine nucleotides from the nucleotide pool, thus preventing their incorporation into DNA/RNA and avoiding chromosomal lesions. In Rhodospirillum centenum (strain ATCC 51521 / SW), this protein is dITP/XTP pyrophosphatase.